Here is a 1193-residue protein sequence, read N- to C-terminus: Pyruvate carboxylase (1193 aa).

A Biotin carboxylation domain is found at 41–493; it reads QFQKILVANR…WTTFIDDTTE (453 aa). The ATP site is built by Lys-159, Glu-243, and His-278. The ATP-grasp domain maps to 163–360; it reads RQLAIRCNVP…IVAAQIQIAA (198 aa). Arg-335 is a catalytic residue. The 269-residue stretch at 579-847 folds into the Pyruvate carboxyltransferase domain; the sequence is CLIMDTTWRD…DPGLNSAHVR (269 aa). Substrate-binding positions include 587-591 and Arg-660; that span reads RDAHQ. A divalent metal cation is bound at residue Asp-588. A divalent metal cation is bound by residues Lys-756, His-786, and His-788. Residue Lys-756 is modified to N6-carboxylysine. Thr-921 provides a ligand contact to substrate. The region spanning 1116–1191 is the Biotinyl-binding domain; sequence KADVGDSSQV…DGQDLVCKIT (76 aa). Lys-1157 is subject to N6-biotinyllysine.

Biotin serves as cofactor. The cofactor is Zn(2+).

It is found in the cytoplasm. The enzyme catalyses hydrogencarbonate + pyruvate + ATP = oxaloacetate + ADP + phosphate + H(+). Its pathway is carbohydrate biosynthesis; gluconeogenesis. Functionally, pyruvate carboxylase catalyzes a 2-step reaction, involving the ATP-dependent carboxylation of the covalently attached biotin in the first step and the transfer of the carboxyl group to pyruvate in the second. This chain is Pyruvate carboxylase (pyc), found in Aspergillus terreus (strain NIH 2624 / FGSC A1156).